We begin with the raw amino-acid sequence, 520 residues long: Ribonuclease Y (520 aa).

The chain crosses the membrane as a helical span at residues 3-23 (FILVLCTVSSLFVGGGTGIFL). Residues 209-272 (TVTAVTLPSE…QVAKMALERL (64 aa)) form the KH domain. Residues 335–429 (VLRHSIEVAS…VQASDCLSGA (95 aa)) enclose the HD domain.

Belongs to the RNase Y family.

It is found in the cell membrane. In terms of biological role, endoribonuclease that initiates mRNA decay. The polypeptide is Ribonuclease Y (Lawsonia intracellularis (strain PHE/MN1-00)).